A 182-amino-acid polypeptide reads, in one-letter code: Homeobox protein pnx (182 aa).

An important for interaction with tle3a region spans residues 1 to 34 (MHEETSNSTLQGKTSFSIADILDPAKFNGTRETR). Residues 24-63 (PAKFNGTRETREISNNRESPKTTSPTQDPSAPNIANASAA) form a disordered region. Positions 29–43 (GTRETREISNNRESP) are enriched in basic and acidic residues. The span at 52-63 (PSAPNIANASAA) shows a compositional bias: low complexity. The segment at residues 67 to 126 (SKRIRTAFTLDQLRILERSFQSSHYLSVFERHCIASALGLSETQVKIWFQNRRTKWKKEL) is a DNA-binding region (homeobox).

Belongs to the NK-1 homeobox family. As to quaternary structure, interacts with tle3a.

Its subcellular location is the nucleus. Functionally, transcriptional repressor. Activity as a repressor is enhanced by binding to the corepressor tle3a. This chain is Homeobox protein pnx, found in Danio rerio (Zebrafish).